The chain runs to 682 residues: Probable glycosyl transferase Gly (682 aa).

UDP contacts are provided by residues 21–26 and 112–113; these read CASFSD and DC. 3 residues coordinate Mn(2+): Asp-112, Asp-114, and His-230. 230–236 is a UDP binding site; the sequence is HYLPERK.

This sequence belongs to the glycosyltransferase 8 family. In terms of assembly, part of the accessory SecA2/SecY2 protein translocation apparatus required to export cell wall protein GspB.

Its function is as follows. Part of the accessory SecA2/SecY2 system specifically required to export GspB, a serine-rich repeat cell wall protein encoded upstream in the same operon. This is Probable glycosyl transferase Gly (gly) from Streptococcus gordonii.